The primary structure comprises 694 residues: Frizzled-8 (694 aa).

The N-terminal stretch at 1 to 27 is a signal peptide; that stretch reads MEWGYLLEVTSLLAALALLQRSSGAAA. Residues 28–275 lie on the Extracellular side of the membrane; the sequence is ASAKELACQE…NPFFSQDERA (248 aa). The 122-residue stretch at 30-151 folds into the FZ domain; sequence AKELACQEIT…GNPDTLCMDY (122 aa). Intrachain disulfides connect Cys-35-Cys-96, Cys-43-Cys-89, Cys-80-Cys-118, Cys-107-Cys-148, and Cys-111-Cys-135. N-linked (GlcNAc...) asparagine glycosylation is present at Asn-49. 71 to 78 lines the hexadecanoate pocket; the sequence is QFWPLVEI. The tract at residues 95 to 100 is wnt-binding; the sequence is ICLEDY. The segment at 147–152 is wnt-binding; it reads LCMDYN. Residue Asn-152 is glycosylated (N-linked (GlcNAc...) asparagine). A disordered region spans residues 155–226; that stretch reads DLTTAAPSPP…KARPPGGGAA (72 aa). The span at 161 to 175 shows a compositional bias: pro residues; it reads PSPPRRLPPPPPGEQ. Over residues 176–186 the composition is skewed to low complexity; the sequence is PPSGSGHGRPP. A compositionally biased stretch (gly residues) spans 210–225; that stretch reads RGGGGGGKARPPGGGA. A helical membrane pass occupies residues 276 to 296; it reads FTVFWIGLWSVLCFVSTFATV. Topologically, residues 297–312 are cytoplasmic; sequence STFLIDMERFKYPERP. A helical transmembrane segment spans residues 313 to 333; that stretch reads IIFLSACYLFVSVGYLVRLVA. Topologically, residues 334–396 are extracellular; sequence GHEKVACSGG…RYETTGPALC (63 aa). A helical transmembrane segment spans residues 397-417; sequence TVVFLLVYFFGMASSIWWVIL. The Cytoplasmic portion of the chain corresponds to 418 to 439; the sequence is SLTWFLAAGMKWGNEAIAGYSQ. Residues 440–460 traverse the membrane as a helical segment; sequence YFHLAAWLVPSVKSIAVLALS. Residues 461 to 483 are Extracellular-facing; it reads SVDGDPVAGICYVGNQSLDNLRG. Residue Asn-475 is glycosylated (N-linked (GlcNAc...) asparagine). Residues 484–504 form a helical membrane-spanning segment; it reads FVLAPLVIYLFIGTMFLLAGF. Residues 505-532 lie on the Cytoplasmic side of the membrane; it reads VSLFRIRSVIKQQDGPTKTHKLEKLMIR. A helical membrane pass occupies residues 533-553; that stretch reads LGLFTVLYTVPAAVVVACLFY. Residues 554 to 584 lie on the Extracellular side of the membrane; that stretch reads EQHNRPRWEATHNCPCLRDLQPDQARRPDYA. A helical transmembrane segment spans residues 585–605; it reads VFMLKYFMCLVVGITSGVWVW. Over 606-694 the chain is Cytoplasmic; sequence SGKTLESWRS…YPKQMPLSQV (89 aa). The short motif at 608-613 is the Lys-Thr-X-X-X-Trp motif, mediates interaction with the PDZ domain of Dvl family members element; it reads KTLESW. The segment covering 648-664 has biased composition (gly residues); it reads GGGGPGGGGGPGGGGGS. The tract at residues 648-668 is disordered; it reads GGGGPGGGGGPGGGGGSLYSD. The PDZ-binding signature appears at 692-694; the sequence is SQV.

The protein belongs to the G-protein coupled receptor Fz/Smo family. Component of a Wnt-signaling complex that contains a WNT protein, a FZD protein and LRP5 or LRP6. Interacts directly with LRP5 or LRP6; the interaction is promoted by Wnt-binding and signaling and inhibited by DKK1. Interacts with GPOC, RSPO1 and RSPO3. Interacts with glypican GPC3. Post-translationally, ubiquitinated by ZNRF3, leading to its degradation by the proteasome. In terms of tissue distribution, most abundant in fetal kidney, followed by brain and lung. In adult tissues, expressed in kidney, heart, pancreas and skeletal muscle.

The protein localises to the membrane. It localises to the golgi apparatus. The protein resides in the cell membrane. Its function is as follows. Receptor for Wnt proteins. Component of the Wnt-Fzd-LRP5-LRP6 complex that triggers beta-catenin signaling through inducing aggregation of receptor-ligand complexes into ribosome-sized signalosomes. The beta-catenin canonical signaling pathway leads to the activation of disheveled proteins, inhibition of GSK-3 kinase, nuclear accumulation of beta-catenin and activation of Wnt target genes. A second signaling pathway involving PKC and calcium fluxes has been seen for some family members, but it is not yet clear if it represents a distinct pathway or if it can be integrated in the canonical pathway, as PKC seems to be required for Wnt-mediated inactivation of GSK-3 kinase. Both pathways seem to involve interactions with G-proteins. May be involved in transduction and intercellular transmission of polarity information during tissue morphogenesis and/or in differentiated tissues. Coreceptor along with RYK of Wnt proteins, such as WNT1. In Homo sapiens (Human), this protein is Frizzled-8 (FZD8).